Here is a 225-residue protein sequence, read N- to C-terminus: Uracil-DNA glycosylase 1 (225 aa).

The Proton acceptor role is filled by Asp-68.

This sequence belongs to the uracil-DNA glycosylase (UDG) superfamily. UNG family.

It is found in the cytoplasm. The enzyme catalyses Hydrolyzes single-stranded DNA or mismatched double-stranded DNA and polynucleotides, releasing free uracil.. Excises uracil residues from the DNA which can arise as a result of misincorporation of dUMP residues by DNA polymerase or due to deamination of cytosine. The sequence is that of Uracil-DNA glycosylase 1 (ung1) from Streptomyces coelicolor (strain ATCC BAA-471 / A3(2) / M145).